The primary structure comprises 270 residues: Aliphatic sulfonates import ATP-binding protein SsuB (270 aa).

The ABC transporter domain maps to 17–238 (LASKGLRKTF…ARGSHRLAAL (222 aa)). Residue 49–56 (GRSGCGKS) participates in ATP binding. The segment at 248-270 (STPGTAPEPDPVAPLPTQLRWAH) is disordered.

Belongs to the ABC transporter superfamily. Aliphatic sulfonates importer (TC 3.A.1.17.2) family. The complex is composed of two ATP-binding proteins (SsuB), two transmembrane proteins (SsuC) and a solute-binding protein (SsuA).

The protein resides in the cell inner membrane. It carries out the reaction ATP + H2O + aliphatic sulfonate-[sulfonate-binding protein]Side 1 = ADP + phosphate + aliphatic sulfonateSide 2 + [sulfonate-binding protein]Side 1.. Part of the ABC transporter complex SsuABC involved in aliphatic sulfonates import. Responsible for energy coupling to the transport system. This Pseudomonas putida (strain ATCC 47054 / DSM 6125 / CFBP 8728 / NCIMB 11950 / KT2440) protein is Aliphatic sulfonates import ATP-binding protein SsuB.